Reading from the N-terminus, the 370-residue chain is Pyruvate dehydrogenase E1 component subunit alpha (370 aa).

As to quaternary structure, heterodimer of an alpha and a beta chain. Thiamine diphosphate serves as cofactor.

It catalyses the reaction N(6)-[(R)-lipoyl]-L-lysyl-[protein] + pyruvate + H(+) = N(6)-[(R)-S(8)-acetyldihydrolipoyl]-L-lysyl-[protein] + CO2. In terms of biological role, the pyruvate dehydrogenase complex catalyzes the overall conversion of pyruvate to acetyl-CoA and CO(2). It contains multiple copies of three enzymatic components: pyruvate dehydrogenase (E1), dihydrolipoamide acetyltransferase (E2) and lipoamide dehydrogenase (E3). The protein is Pyruvate dehydrogenase E1 component subunit alpha (pdhA) of Staphylococcus epidermidis (strain ATCC 35984 / DSM 28319 / BCRC 17069 / CCUG 31568 / BM 3577 / RP62A).